A 130-amino-acid chain; its full sequence is Fluoride-specific ion channel FluC (130 aa).

Transmembrane regions (helical) follow at residues 9 to 29, 39 to 59, 71 to 91, and 104 to 124; these read LAIILGAIPGALARYYATIFL, YATFLINFSGCVGMGLVVTLA, LLLAVGFLGSYTTFSTYALEV, and VLYGLGSLGIGTIGVLLGSLI. Na(+)-binding residues include G79 and T82.

It belongs to the fluoride channel Fluc/FEX (TC 1.A.43) family.

The protein localises to the cell inner membrane. It carries out the reaction fluoride(in) = fluoride(out). Na(+) is not transported, but it plays an essential structural role and its presence is essential for fluoride channel function. Functionally, fluoride-specific ion channel. Important for reducing fluoride concentration in the cell, thus reducing its toxicity. The protein is Fluoride-specific ion channel FluC of Synechocystis sp. (strain ATCC 27184 / PCC 6803 / Kazusa).